The primary structure comprises 508 residues: Photosystem II CP47 reaction center protein (508 aa).

6 helical membrane-spanning segments follow: residues 21 to 36 (SVHI…WAGS), 101 to 115 (IVFS…IWHW), 140 to 156 (GIHL…FGAF), 203 to 218 (IAAG…FHLS), 237 to 252 (VLSS…AFVV), and 457 to 472 (SFAL…HGSR).

Belongs to the PsbB/PsbC family. PsbB subfamily. As to quaternary structure, PSII is composed of 1 copy each of membrane proteins PsbA, PsbB, PsbC, PsbD, PsbE, PsbF, PsbH, PsbI, PsbJ, PsbK, PsbL, PsbM, PsbT, PsbX, PsbY, PsbZ, Psb30/Ycf12, at least 3 peripheral proteins of the oxygen-evolving complex and a large number of cofactors. It forms dimeric complexes. Binds multiple chlorophylls. PSII binds additional chlorophylls, carotenoids and specific lipids. is required as a cofactor.

Its subcellular location is the plastid. It is found in the chloroplast thylakoid membrane. One of the components of the core complex of photosystem II (PSII). It binds chlorophyll and helps catalyze the primary light-induced photochemical processes of PSII. PSII is a light-driven water:plastoquinone oxidoreductase, using light energy to abstract electrons from H(2)O, generating O(2) and a proton gradient subsequently used for ATP formation. This Lepidium virginicum (Virginia pepperweed) protein is Photosystem II CP47 reaction center protein.